The sequence spans 547 residues: Chaperonin GroEL 1 (547 aa).

Residues 30–33 (TLGP), Lys51, 87–91 (DGTTT), Gly415, and Asp496 contribute to the ATP site.

It belongs to the chaperonin (HSP60) family. As to quaternary structure, forms a cylinder of 14 subunits composed of two heptameric rings stacked back-to-back. Interacts with the co-chaperonin GroES.

It localises to the cytoplasm. It catalyses the reaction ATP + H2O + a folded polypeptide = ADP + phosphate + an unfolded polypeptide.. Together with its co-chaperonin GroES, plays an essential role in assisting protein folding. The GroEL-GroES system forms a nano-cage that allows encapsulation of the non-native substrate proteins and provides a physical environment optimized to promote and accelerate protein folding. The protein is Chaperonin GroEL 1 of Gluconacetobacter diazotrophicus (strain ATCC 49037 / DSM 5601 / CCUG 37298 / CIP 103539 / LMG 7603 / PAl5).